We begin with the raw amino-acid sequence, 186 residues long: ATP synthase subunit delta (186 aa).

Belongs to the ATPase delta chain family. In terms of assembly, F-type ATPases have 2 components, F(1) - the catalytic core - and F(0) - the membrane proton channel. F(1) has five subunits: alpha(3), beta(3), gamma(1), delta(1), epsilon(1). F(0) has three main subunits: a(1), b(2) and c(10-14). The alpha and beta chains form an alternating ring which encloses part of the gamma chain. F(1) is attached to F(0) by a central stalk formed by the gamma and epsilon chains, while a peripheral stalk is formed by the delta and b chains.

Its subcellular location is the cell inner membrane. F(1)F(0) ATP synthase produces ATP from ADP in the presence of a proton or sodium gradient. F-type ATPases consist of two structural domains, F(1) containing the extramembraneous catalytic core and F(0) containing the membrane proton channel, linked together by a central stalk and a peripheral stalk. During catalysis, ATP synthesis in the catalytic domain of F(1) is coupled via a rotary mechanism of the central stalk subunits to proton translocation. Functionally, this protein is part of the stalk that links CF(0) to CF(1). It either transmits conformational changes from CF(0) to CF(1) or is implicated in proton conduction. In Brucella suis biovar 1 (strain 1330), this protein is ATP synthase subunit delta.